Here is a 278-residue protein sequence, read N- to C-terminus: Antiviral protein MAP (278 aa).

Residues 1–28 (MLTTTKVFFLLLTTWITWYAIVNPQSRA) form the signal peptide. Cysteine 64 and cysteine 248 are oxidised to a cystine. Glutamate 196 is an active-site residue.

It carries out the reaction Endohydrolysis of the N-glycosidic bond at one specific adenosine on the 28S rRNA.. Inhibits viral infection of plants, and protein synthesis in vitro. The protein is Antiviral protein MAP of Mirabilis jalapa (Garden four-o'clock).